A 198-amino-acid chain; its full sequence is TATA-box-binding protein (198 aa).

2 tandem repeats follow at residues 14-90 and 105-181.

The protein belongs to the TBP family.

Functionally, general factor that plays a role in the activation of archaeal genes transcribed by RNA polymerase. Binds specifically to the TATA box promoter element which lies close to the position of transcription initiation. This chain is TATA-box-binding protein, found in Saccharolobus shibatae (strain ATCC 51178 / DSM 5389 / JCM 8931 / NBRC 15437 / B12) (Sulfolobus shibatae).